Here is a 2259-residue protein sequence, read N- to C-terminus: Protein Ycf2 (2259 aa).

1556–1563 (GSQETGRS) lines the ATP pocket.

It belongs to the Ycf2 family.

Its subcellular location is the plastid. It is found in the chloroplast stroma. In terms of biological role, probable ATPase of unknown function. Its presence in a non-photosynthetic plant (Epifagus virginiana) and experiments in tobacco indicate that it has an essential function which is probably not related to photosynthesis. In Physcomitrium patens (Spreading-leaved earth moss), this protein is Protein Ycf2.